We begin with the raw amino-acid sequence, 777 residues long: Disintegrin and metalloproteinase domain-containing protein 5 (777 aa).

The N-terminal stretch at 1 to 16 (MFLVLVLLTGLGRLYA) is a signal peptide. Positions 17-142 (GNNPRKTFVQ…VLSGFTHMIY (126 aa)) are excised as a propeptide. At 17-706 (GNNPRKTFVQ…RGYVVLSTKR (690 aa)) the chain is on the extracellular side. Residues Asn49 and Asn123 are each glycosylated (N-linked (GlcNAc...) asparagine). Residues 185–382 (RYIDMYIVVN…YGLTCLRNTS (198 aa)) form the Peptidase M12B domain. 4 cysteine pairs are disulfide-bonded: Cys294-Cys377, Cys336-Cys361, Cys338-Cys343, and Cys456-Cys477. In terms of domain architecture, Disintegrin spans 396-485 (RRICGNSIRE…DCVHDTYAQN (90 aa)). Asn566 carries an N-linked (GlcNAc...) asparagine glycan. The region spanning 633 to 667 (NNGSCNAEIHCQGRGICNNLDNCHCHKGFVPPECA) is the EGF-like domain. Disulfide bonds link Cys637/Cys649, Cys643/Cys655, and Cys657/Cys666. The chain crosses the membrane as a helical span at residues 707 to 727 (FQLIFYIGIPVIIIVAAILIK). The Cytoplasmic segment spans residues 728-777 (QNQLGKLFCRGEKEHMSSVSEDGSRSVTLSATESKFPADTEHSNKEEDAQ). Positions 744–760 (SSVSEDGSRSVTLSATE) are enriched in polar residues. A disordered region spans residues 744 to 777 (SSVSEDGSRSVTLSATESKFPADTEHSNKEEDAQ). Residues 763 to 777 (FPADTEHSNKEEDAQ) are compositionally biased toward basic and acidic residues.

Interacts with TEX101. Post-translationally, subject to proteolytic processing during epididymal transit of spermatozoa. In terms of tissue distribution, detected in testis.

It localises to the membrane. This is a non catalytic metalloprotease-like protein. May play a role in sperm-egg fusion. The sequence is that of Disintegrin and metalloproteinase domain-containing protein 5 (ADAM5) from Cavia porcellus (Guinea pig).